The sequence spans 337 residues: Protein ABHD13 (337 aa).

A helical; Signal-anchor for type II membrane protein membrane pass occupies residues 30–50 (LLALILTFHLYGGFVLLGLIL). Catalysis depends on charge relay system residues Ser193, Asp268, and His298. A glycan (N-linked (GlcNAc...) asparagine) is linked at Asn299.

The protein belongs to the serine esterase family.

The protein resides in the membrane. This is Protein ABHD13 from Danio rerio (Zebrafish).